Here is a 251-residue protein sequence, read N- to C-terminus: Ditrans,polycis-undecaprenyl-diphosphate synthase ((2E,6E)-farnesyl-diphosphate specific) (251 aa).

Residue Asp19 is part of the active site. Asp19 provides a ligand contact to Mg(2+). Substrate is bound by residues 20-23 (GNNR), Trp24, His36, and 64-66 (SSE). The active-site Proton acceptor is the Asn67. Substrate is bound by residues Trp68, Arg70, Arg187, and 193 to 195 (RIS). Glu206 contributes to the Mg(2+) binding site.

This sequence belongs to the UPP synthase family. In terms of assembly, homodimer. The cofactor is Mg(2+).

The catalysed reaction is 8 isopentenyl diphosphate + (2E,6E)-farnesyl diphosphate = di-trans,octa-cis-undecaprenyl diphosphate + 8 diphosphate. In terms of biological role, catalyzes the sequential condensation of isopentenyl diphosphate (IPP) with (2E,6E)-farnesyl diphosphate (E,E-FPP) to yield (2Z,6Z,10Z,14Z,18Z,22Z,26Z,30Z,34E,38E)-undecaprenyl diphosphate (di-trans,octa-cis-UPP). UPP is the precursor of glycosyl carrier lipid in the biosynthesis of bacterial cell wall polysaccharide components such as peptidoglycan and lipopolysaccharide. The protein is Ditrans,polycis-undecaprenyl-diphosphate synthase ((2E,6E)-farnesyl-diphosphate specific) of Pseudomonas aeruginosa (strain ATCC 15692 / DSM 22644 / CIP 104116 / JCM 14847 / LMG 12228 / 1C / PRS 101 / PAO1).